A 260-amino-acid chain; its full sequence is Hydroxyethylthiazole kinase (260 aa).

Met-36 lines the substrate pocket. 2 residues coordinate ATP: Arg-112 and Thr-157. Gly-184 lines the substrate pocket.

The protein belongs to the Thz kinase family. The cofactor is Mg(2+).

It catalyses the reaction 5-(2-hydroxyethyl)-4-methylthiazole + ATP = 4-methyl-5-(2-phosphooxyethyl)-thiazole + ADP + H(+). It participates in cofactor biosynthesis; thiamine diphosphate biosynthesis; 4-methyl-5-(2-phosphoethyl)-thiazole from 5-(2-hydroxyethyl)-4-methylthiazole: step 1/1. Functionally, catalyzes the phosphorylation of the hydroxyl group of 4-methyl-5-beta-hydroxyethylthiazole (THZ). This Shouchella clausii (strain KSM-K16) (Alkalihalobacillus clausii) protein is Hydroxyethylthiazole kinase.